A 286-amino-acid polypeptide reads, in one-letter code: MKNILAIQSHVVFGHAGNSAAEFPMRRLGANVWPLNTVQFSNHTQYGKWTGCVMPPSHLTEIVQGIADIGQLAHCDAVLSGYLGSAEQGEHILGIVRQVKAANPQAKYFCDPVMGHPEKGCIVAPGVAEFHVRYALPASDIIAPNLIELEILSKHSVNNVDDAVQAARELIAQGPEIVLVKHLARAGYSSERFEMLLVTAQEAWHISRPLVDFGSRQPVGVGDVTSGLLLVKLLQGATLQQALEHVTAAVYEIMIATKTMQEYELQVVAAQDRIANPEHYFSATRL.

Residues serine 9 and 44–45 (TQ) each bind substrate. ATP is bound by residues aspartate 111, alanine 143, glutamate 148, lysine 181, and 208 to 211 (RPLV). Aspartate 223 serves as a coordination point for substrate.

Belongs to the pyridoxine kinase family. PdxY subfamily. Homodimer. Mg(2+) is required as a cofactor.

The enzyme catalyses pyridoxal + ATP = pyridoxal 5'-phosphate + ADP + H(+). It functions in the pathway cofactor metabolism; pyridoxal 5'-phosphate salvage; pyridoxal 5'-phosphate from pyridoxal: step 1/1. In terms of biological role, pyridoxal kinase involved in the salvage pathway of pyridoxal 5'-phosphate (PLP). Catalyzes the phosphorylation of pyridoxal to PLP. In Salmonella choleraesuis (strain SC-B67), this protein is Pyridoxal kinase PdxY.